A 644-amino-acid chain; its full sequence is Serine/threonine kinase YeaG (644 aa).

It belongs to the PrkA family. Monomer.

Its subcellular location is the cytoplasm. The catalysed reaction is L-seryl-[protein] + ATP = O-phospho-L-seryl-[protein] + ADP + H(+). The enzyme catalyses L-threonyl-[protein] + ATP = O-phospho-L-threonyl-[protein] + ADP + H(+). Functionally, kinase that plays a role in the adaptation to sustained nitrogen starvation. The sequence is that of Serine/threonine kinase YeaG (yeaG) from Escherichia coli O157:H7.